Consider the following 248-residue polypeptide: MNRQPIVQLSNLSWTFREGETRRQVLDHITFDFEPGEFVALLGQSGSGKSTLLNLISGIEKPTTGDVTINGFAITQKTERDRTLFRRDQIGIVFQFFNLIPTLTVLENITLPQELAGVSQRKAAVVARDLLEKVGMADRERTFPDKLSGGEQQRVAISRALAHNPMLVLADEPTGNLDSDTGDKVLDVLLDLTRQAGKTLIMATHSPSMTQHADRVVNLQGGRLIPAVNRENQTDQPASTILLPTSYE.

The 240-residue stretch at 7–246 (VQLSNLSWTF…PASTILLPTS (240 aa)) folds into the ABC transporter domain. 43–50 (GQSGSGKS) is an ATP binding site.

Belongs to the ABC transporter superfamily.

This is an uncharacterized protein from Mycobacterium tuberculosis (strain CDC 1551 / Oshkosh).